Reading from the N-terminus, the 316-residue chain is Beta-ketoacyl-[acyl-carrier-protein] synthase III (316 aa).

Catalysis depends on residues Cys-112 and His-243. The interval 244-248 is ACP-binding; the sequence is QANLR. The active site involves Asn-273.

It belongs to the thiolase-like superfamily. FabH family. In terms of assembly, homodimer.

The protein localises to the cytoplasm. The enzyme catalyses malonyl-[ACP] + acetyl-CoA + H(+) = 3-oxobutanoyl-[ACP] + CO2 + CoA. It functions in the pathway lipid metabolism; fatty acid biosynthesis. Catalyzes the condensation reaction of fatty acid synthesis by the addition to an acyl acceptor of two carbons from malonyl-ACP. Catalyzes the first condensation reaction which initiates fatty acid synthesis and may therefore play a role in governing the total rate of fatty acid production. Possesses both acetoacetyl-ACP synthase and acetyl transacylase activities. Its substrate specificity determines the biosynthesis of branched-chain and/or straight-chain of fatty acids. The polypeptide is Beta-ketoacyl-[acyl-carrier-protein] synthase III (Histophilus somni (strain 2336) (Haemophilus somnus)).